Here is a 339-residue protein sequence, read N- to C-terminus: Phosphoribosylformylglycinamidine cyclo-ligase (339 aa).

It belongs to the AIR synthase family.

The protein localises to the cytoplasm. It carries out the reaction 2-formamido-N(1)-(5-O-phospho-beta-D-ribosyl)acetamidine + ATP = 5-amino-1-(5-phospho-beta-D-ribosyl)imidazole + ADP + phosphate + H(+). It functions in the pathway purine metabolism; IMP biosynthesis via de novo pathway; 5-amino-1-(5-phospho-D-ribosyl)imidazole from N(2)-formyl-N(1)-(5-phospho-D-ribosyl)glycinamide: step 2/2. The sequence is that of Phosphoribosylformylglycinamidine cyclo-ligase from Streptococcus thermophilus (strain ATCC BAA-250 / LMG 18311).